Reading from the N-terminus, the 167-residue chain is Ureidoglycolate lyase (167 aa).

This sequence belongs to the ureidoglycolate lyase family. In terms of assembly, homodimer. Ni(2+) is required as a cofactor.

It carries out the reaction (S)-ureidoglycolate = urea + glyoxylate. The protein operates within nitrogen metabolism; (S)-allantoin degradation. In terms of biological role, catalyzes the catabolism of the allantoin degradation intermediate (S)-ureidoglycolate, generating urea and glyoxylate. Involved in the utilization of allantoin as nitrogen source. The chain is Ureidoglycolate lyase from Pseudomonas fluorescens (strain ATCC BAA-477 / NRRL B-23932 / Pf-5).